The following is a 449-amino-acid chain: Phosphoglucosamine mutase (449 aa).

Ser101 acts as the Phosphoserine intermediate in catalysis. Positions 101, 241, 243, and 245 each coordinate Mg(2+). At Ser101 the chain carries Phosphoserine.

The protein belongs to the phosphohexose mutase family. Mg(2+) is required as a cofactor. In terms of processing, activated by phosphorylation.

It catalyses the reaction alpha-D-glucosamine 1-phosphate = D-glucosamine 6-phosphate. In terms of biological role, catalyzes the conversion of glucosamine-6-phosphate to glucosamine-1-phosphate. This is Phosphoglucosamine mutase from Acetivibrio thermocellus (strain ATCC 27405 / DSM 1237 / JCM 9322 / NBRC 103400 / NCIMB 10682 / NRRL B-4536 / VPI 7372) (Clostridium thermocellum).